The primary structure comprises 31 residues: Aspartate aminotransferase, cytoplasmic (31 aa).

The protein belongs to the class-I pyridoxal-phosphate-dependent aminotransferase family. As to quaternary structure, homodimer. It depends on pyridoxal 5'-phosphate as a cofactor.

It localises to the cytoplasm. It carries out the reaction L-aspartate + 2-oxoglutarate = oxaloacetate + L-glutamate. The enzyme catalyses L-cysteine + 2-oxoglutarate = 2-oxo-3-sulfanylpropanoate + L-glutamate. The catalysed reaction is (2S)-2-aminobutanoate + 2-oxoglutarate = 2-oxobutanoate + L-glutamate. It catalyses the reaction 3-sulfino-L-alanine + 2-oxoglutarate = 3-sulfinopyruvate + L-glutamate. Its function is as follows. Biosynthesis of L-glutamate from L-aspartate or L-cysteine. Important regulator of levels of glutamate, the major excitatory neurotransmitter of the vertebrate central nervous system. Acts as a scavenger of glutamate in brain neuroprotection. The aspartate aminotransferase activity is involved in hepatic glucose synthesis during development and in adipocyte glyceroneogenesis. Using L-cysteine as substrate, regulates levels of mercaptopyruvate, an important source of hydrogen sulfide. Mercaptopyruvate is converted into H(2)S via the action of 3-mercaptopyruvate sulfurtransferase (3MST). Hydrogen sulfide is an important synaptic modulator and neuroprotectant in the brain. This is Aspartate aminotransferase, cytoplasmic from Oryctolagus cuniculus (Rabbit).